A 1135-amino-acid chain; its full sequence is Retinoblastoma-like protein 2 (1135 aa).

A disordered region spans residues 1 to 43 (MASGGNQSSPPPPAAAASSEEEEEDGDTADRAQPAGSPSHQIQ). The residue at position 410 (serine 410) is a Phosphoserine. A Phosphothreonine modification is found at threonine 414. The segment at 414 to 613 (TPVSTATHSL…DRIRDNENRV (200 aa)) is domain A. The tract at residues 414–1021 (TPVSTATHSL…QTFAMKYSQA (608 aa)) is pocket; binds E1A. Serine 417 carries O-linked (GlcNAc) serine glycosylation. Residues 614-824 (PTCEEVTPPH…QGQPLTSSSI (211 aa)) are spacer. Serine 636 carries the phosphoserine modification. Phosphothreonine is present on threonine 639. 3 disordered regions span residues 649 to 698 (DAGG…PPQP), 806 to 825 (ISPG…SSIR), and 932 to 995 (RRNS…EEEE). Positions 656–674 (SVTSPTTLYDRYSSPTVST) are enriched in polar residues. Serine 659, serine 669, and serine 684 each carry phosphoserine. A compositionally biased stretch (low complexity) spans 806-818 (ISPGGQQQNQGQP). A domain B region spans residues 825 to 1021 (RPRKTSSLSL…QTFAMKYSQA (197 aa)). Polar residues-rich tracts occupy residues 935 to 950 (SGSC…PTEL) and 958 to 969 (DSSPVMRSNSTL). Serine 942, serine 946, serine 960, serine 965, and serine 967 each carry phosphoserine. A Phosphothreonine modification is found at threonine 968. Positions 971 to 981 (VPQPSSAPPTP) are enriched in pro residues. 2 positions are modified to phosphoserine: serine 975 and serine 976. Phosphothreonine is present on threonine 980. 4 positions are modified to phosphoserine: serine 1031, serine 1064, serine 1076, and serine 1108.

It belongs to the retinoblastoma protein (RB) family. In terms of assembly, interacts with AATF, KMT5B and KMT5C. Component of the DREAM complex (also named LINC complex) at least composed of E2F4, E2F5, LIN9, LIN37, LIN52, LIN54, MYBL1, MYBL2, RBL1, RBL2, RBBP4, TFDP1 and TFDP2. The complex exists in quiescent cells where it represses cell cycle-dependent genes. It dissociates in S phase when LIN9, LIN37, LIN52 and LIN54 form a subcomplex that binds to MYBL2. Interacts with USP4. Part of the peroxisome proliferator activated receptor alpha (PPAR-alpha) interacting complex (PRIC). Interacts with RINT1. Interacts with PML. Interacts with RBBP9. Interacts with CD53. During G0 and early G1 phase of the cell cycle, phosphorylated on Ser-636 and on 5 sites within the domain B. Phosphorylation on Ser-669 in G1 leads to its ubiquitin-dependent proteolysis.

The protein resides in the nucleus. Its function is as follows. Key regulator of entry into cell division. Directly involved in heterochromatin formation by maintaining overall chromatin structure and, in particular, that of constitutive heterochromatin by stabilizing histone methylation. Recruits and targets histone methyltransferases KMT5B and KMT5C, leading to epigenetic transcriptional repression. Controls histone H4 'Lys-20' trimethylation. Probably acts as a transcription repressor by recruiting chromatin-modifying enzymes to promoters. Potent inhibitor of E2F-mediated trans-activation, associates preferentially with E2F5. Binds to cyclins A and E. Binds to and may be involved in the transforming capacity of the adenovirus E1A protein. May act as a tumor suppressor. The protein is Retinoblastoma-like protein 2 (Rbl2) of Rattus norvegicus (Rat).